A 450-amino-acid chain; its full sequence is Glucose-6-phosphate isomerase (450 aa).

Thr-39 carries the post-translational modification Phosphothreonine. Catalysis depends on Glu-291, which acts as the Proton donor. Active-site residues include His-312 and Lys-426.

This sequence belongs to the GPI family.

It is found in the cytoplasm. It catalyses the reaction alpha-D-glucose 6-phosphate = beta-D-fructose 6-phosphate. Its pathway is carbohydrate biosynthesis; gluconeogenesis. It functions in the pathway carbohydrate degradation; glycolysis; D-glyceraldehyde 3-phosphate and glycerone phosphate from D-glucose: step 2/4. In terms of biological role, catalyzes the reversible isomerization of glucose-6-phosphate to fructose-6-phosphate. This Halalkalibacterium halodurans (strain ATCC BAA-125 / DSM 18197 / FERM 7344 / JCM 9153 / C-125) (Bacillus halodurans) protein is Glucose-6-phosphate isomerase.